The primary structure comprises 127 residues: Aspartate 1-decarboxylase (127 aa).

Serine 25 functions as the Schiff-base intermediate with substrate; via pyruvic acid in the catalytic mechanism. Serine 25 bears the Pyruvic acid (Ser) mark. Substrate is bound at residue threonine 57. The active-site Proton donor is the tyrosine 58. 73–75 (GAA) is a binding site for substrate.

Belongs to the PanD family. Heterooctamer of four alpha and four beta subunits. Requires pyruvate as cofactor. Post-translationally, is synthesized initially as an inactive proenzyme, which is activated by self-cleavage at a specific serine bond to produce a beta-subunit with a hydroxyl group at its C-terminus and an alpha-subunit with a pyruvoyl group at its N-terminus.

Its subcellular location is the cytoplasm. It carries out the reaction L-aspartate + H(+) = beta-alanine + CO2. It functions in the pathway cofactor biosynthesis; (R)-pantothenate biosynthesis; beta-alanine from L-aspartate: step 1/1. Catalyzes the pyruvoyl-dependent decarboxylation of aspartate to produce beta-alanine. The chain is Aspartate 1-decarboxylase from Geobacillus sp. (strain WCH70).